The sequence spans 156 residues: ATP synthase subunit b 2 (156 aa).

The helical transmembrane segment at 6–26 threads the bilayer; it reads SMFGQAISFVIFVWLCMKYVW.

This sequence belongs to the ATPase B chain family. F-type ATPases have 2 components, F(1) - the catalytic core - and F(0) - the membrane proton channel. F(1) has five subunits: alpha(3), beta(3), gamma(1), delta(1), epsilon(1). F(0) has three main subunits: a(1), b(2) and c(10-14). The alpha and beta chains form an alternating ring which encloses part of the gamma chain. F(1) is attached to F(0) by a central stalk formed by the gamma and epsilon chains, while a peripheral stalk is formed by the delta and b chains.

Its subcellular location is the cell inner membrane. Functionally, f(1)F(0) ATP synthase produces ATP from ADP in the presence of a proton or sodium gradient. F-type ATPases consist of two structural domains, F(1) containing the extramembraneous catalytic core and F(0) containing the membrane proton channel, linked together by a central stalk and a peripheral stalk. During catalysis, ATP synthesis in the catalytic domain of F(1) is coupled via a rotary mechanism of the central stalk subunits to proton translocation. Component of the F(0) channel, it forms part of the peripheral stalk, linking F(1) to F(0). This Vibrio campbellii (strain ATCC BAA-1116) protein is ATP synthase subunit b 2.